We begin with the raw amino-acid sequence, 407 residues long: Imidazolonepropionase (407 aa).

2 residues coordinate Fe(3+): His74 and His76. 2 residues coordinate Zn(2+): His74 and His76. 4-imidazolone-5-propanoate contacts are provided by Arg83, Tyr146, and His179. An N-formimidoyl-L-glutamate-binding site is contributed by Tyr146. Fe(3+) is bound at residue His244. His244 contacts Zn(2+). 4-imidazolone-5-propanoate is bound at residue Gln247. Fe(3+) is bound at residue Asp319. Residue Asp319 participates in Zn(2+) binding. N-formimidoyl-L-glutamate-binding residues include Asn321 and Gly323. Thr324 is a binding site for 4-imidazolone-5-propanoate.

It belongs to the metallo-dependent hydrolases superfamily. HutI family. It depends on Zn(2+) as a cofactor. Fe(3+) is required as a cofactor.

The protein localises to the cytoplasm. The catalysed reaction is 4-imidazolone-5-propanoate + H2O = N-formimidoyl-L-glutamate. It participates in amino-acid degradation; L-histidine degradation into L-glutamate; N-formimidoyl-L-glutamate from L-histidine: step 3/3. Its function is as follows. Catalyzes the hydrolytic cleavage of the carbon-nitrogen bond in imidazolone-5-propanoate to yield N-formimidoyl-L-glutamate. It is the third step in the universal histidine degradation pathway. The chain is Imidazolonepropionase from Salmonella schwarzengrund (strain CVM19633).